Consider the following 159-residue polypeptide: Eukaryotic translation initiation factor 5A-4 (159 aa).

Residues 1 to 12 are compositionally biased toward basic and acidic residues; sequence MSDEEHQFESKA. A disordered region spans residues 1-21; it reads MSDEEHQFESKADAGASKTYP. K52 is subject to Hypusine.

This sequence belongs to the eIF-5A family. Lys-52 undergoes hypusination, a unique post-translational modification that consists in the addition of a butylamino group from spermidine to lysine side chain, leading to the formation of the unusual amino acid hypusine. eIF-5As are the only known proteins to undergo this modification, which is essential for their function.

Translation factor that promotes translation elongation and termination, particularly upon ribosome stalling at specific amino acid sequence contexts. Binds between the exit (E) and peptidyl (P) site of the ribosome and promotes rescue of stalled ribosome: specifically required for efficient translation of polyproline-containing peptides as well as other motifs that stall the ribosome. Acts as a ribosome quality control (RQC) cofactor by joining the RQC complex to facilitate peptidyl transfer during CAT tailing step. The protein is Eukaryotic translation initiation factor 5A-4 (EIF5A4) of Solanum tuberosum (Potato).